A 270-amino-acid chain; its full sequence is Urease accessory protein UreD (270 aa).

This sequence belongs to the UreD family. As to quaternary structure, ureD, UreF and UreG form a complex that acts as a GTP-hydrolysis-dependent molecular chaperone, activating the urease apoprotein by helping to assemble the nickel containing metallocenter of UreC. The UreE protein probably delivers the nickel.

The protein localises to the cytoplasm. Its function is as follows. Required for maturation of urease via the functional incorporation of the urease nickel metallocenter. The polypeptide is Urease accessory protein UreD (Klebsiella pneumoniae).